The sequence spans 223 residues: MAGNKGRGRAAYTFNIEAVGFSRGEKLPDVVLKPPPLFPDTDYKPVPLKTGEDEDYMLALKQELRETVKRLPYFIEPPEEKQDDIERYSKRYMKVYKEEWVPDWRRLPREMMPRKKCKKGDPKSKPSKAAAKATSLINSADVLKTIEELEKRGEGERSDEENEEKEGSKEKDKDDEEDGEEDAEQEDYDEEEQEEENDYINSYFDNGDDFGVDSDDNMDEATY.

Over residues 111–124 the composition is skewed to basic and acidic residues; sequence MMPRKKCKKGDPKS. Positions 111–223 are disordered; it reads MMPRKKCKKG…SDDNMDEATY (113 aa). Thr-134 is modified (phosphothreonine). The span at 144–156 shows a compositional bias: basic and acidic residues; it reads KTIEELEKRGEGE. At Ser-158 the chain carries Phosphoserine. Acidic residues-rich tracts occupy residues 173 to 198 and 206 to 223; these read KDDE…EEND and NGDD…EATY.

It belongs to the eukaryotic RPC7 RNA polymerase subunit family. Component of the RNA polymerase III complex consisting of 17 subunits: a ten-subunit horseshoe-shaped catalytic core composed of POLR3A/RPC1, POLR3B/RPC2, POLR1C/RPAC1, POLR1D/RPAC2, POLR3K/RPC10, POLR2E/RPABC1, POLR2F/RPABC2, POLR2H/RPABC3, POLR2K/RPABC4 and POLR2L/RPABC5; a mobile stalk composed of two subunits POLR3H/RPC8 and CRCP/RPC9, protruding from the core and functioning primarily in transcription initiation; and additional subunits homologous to general transcription factors of the RNA polymerase II machinery, POLR3C/RPC3-POLR3F/RPC6-POLR3G/RPC7 heterotrimer required for transcription initiation and POLR3D/RPC4-POLR3E/RPC5 heterodimer involved in both transcription initiation and termination. Directly interacts with POLR3C/RPC62. Also found in a trimeric complex with POLR3C/RPC3 and POLR3GL. Expressed at low levels in the liver.

The protein resides in the nucleus. Its subcellular location is the cytoplasm. Functionally, DNA-dependent RNA polymerase catalyzes the transcription of DNA into RNA using the four ribonucleoside triphosphates as substrates. Specific peripheric component of RNA polymerase III (Pol III) which synthesizes small non-coding RNAs including 5S rRNA, snRNAs, tRNAs and miRNAs from at least 500 distinct genomic loci. Acts as a long tether that bridges POLR3C/RPC3-POLR3F/RPC6-POLR3G/RPC7 heterotrimer and the mobile stalk of Pol III, coordinating the dynamics of Pol III stalk and clamp modules during the transition from apo to elongation state. Pol III exists as two alternative complexes defined by the mutually exclusive incorporation of subunit POLR3G/RPC7alpha or POLR3GL/RPC7beta. POLR3G/RPC7alpha modulates Pol III transcriptome by specifically enhancing the transcription of snaR-A non-coding RNAs. At resting state, occupies the active site of apo Pol III and keeps Pol III in an autoinhibitory mode, preventing non-specific transcription. Pol III plays a key role in sensing and limiting infection by intracellular bacteria and DNA viruses. Acts as a nuclear and cytosolic DNA sensor involved in innate immune response. Can sense non-self dsDNA that serves as template for transcription into dsRNA. The non-self RNA polymerase III transcripts, such as Epstein-Barr virus-encoded RNAs (EBERs), induce type I interferon and NF-kappa-B through the RIG-I pathway. This Mus musculus (Mouse) protein is DNA-directed RNA polymerase III subunit RPC7 (Polr3g).